The primary structure comprises 1191 residues: Homeodomain-interacting protein kinase 3 (1191 aa).

Lys27 is covalently cross-linked (Glycyl lysine isopeptide (Lys-Gly) (interchain with G-Cter in SUMO2)). Positions 197 to 525 (YEVLDFLGRG…PIETLNHPFV (329 aa)) constitute a Protein kinase domain. Residues 203 to 211 (LGRGTFGQV) and Lys226 contribute to the ATP site. The active-site Proton acceptor is the Asp322. Position 359 is a phosphotyrosine (Tyr359). Positions 766–920 (QNRSNSLQNT…NSMSDDEQES (155 aa)) are interaction with AR. The interval 774–867 (NTNVPHSAFI…SPRPSLRECK (94 aa)) is interaction with FAS. A disordered region spans residues 801-828 (TQDNHTSEGEARTCHEASVRQDSSVSDK). A compositionally biased stretch (basic and acidic residues) spans 802-828 (QDNHTSEGEARTCHEASVRQDSSVSDK). Residues 846-856 (ITISSDTDDEE) form an interaction with UBL1 region. Low complexity predominate over residues 888–905 (SSPDSTLSTSSSGQSSPS). Disordered regions lie at residues 888 to 960 (SSPD…TCAG) and 993 to 1022 (TCQPLTKGQPAPGKLNQPSASAARQQKPTS). The segment covering 1008–1022 (NQPSASAARQQKPTS) has biased composition (polar residues).

This sequence belongs to the protein kinase superfamily. CMGC Ser/Thr protein kinase family. HIPK subfamily. Interacts with Nkx1-2. Interacts with FAS and DAXX. Probably part of a complex consisting of HIPK3, FAS and FADD. Interacts with UBL1/SUMO-1. Interacts with and stabilizes ligand-bound androgen receptor (AR). In terms of processing, autophosphorylated. Autophosphorylation is not required for catalytic activity. Post-translationally, may be sumoylated.

The protein localises to the nucleus. It carries out the reaction L-seryl-[protein] + ATP = O-phospho-L-seryl-[protein] + ADP + H(+). It catalyses the reaction L-threonyl-[protein] + ATP = O-phospho-L-threonyl-[protein] + ADP + H(+). Functionally, seems to negatively regulate apoptosis by promoting FADD phosphorylation. Enhances androgen receptor-mediated transcription. May act as a transcriptional corepressor for NK homeodomain transcription factors. The polypeptide is Homeodomain-interacting protein kinase 3 (Hipk3) (Rattus norvegicus (Rat)).